A 197-amino-acid polypeptide reads, in one-letter code: Protein SPMIP2 (197 aa).

The tract at residues 161–197 (SKAALPIGSRPPKLPKLPKKEEKSKFRPLHQHDARCY) is disordered. Positions 178-197 (PKKEEKSKFRPLHQHDARCY) are enriched in basic and acidic residues.

This is Protein SPMIP2 (SPMIP2) from Bos taurus (Bovine).